The following is a 134-amino-acid chain: Beta-synuclein (134 aa).

Repeat copies occupy residues 20–30 and 31–41. Residues 20–67 form a 4 X 11 AA tandem repeats of [EGS]-K-T-K-[EQ]-[GQ]-V-X(4) region; sequence EKTKQGVTEAAEKTKEGVLYVGSKTKEGVVQGVASVAEKTKEQASHLG. Residues 42-56 form a 3; approximate repeat; it reads SKTKEGVVQGVASVA. Residues 57 to 67 form repeat 4; it reads EKTKEQASHLG. The interval 97 to 134 is disordered; sequence EVAQEAAEEPLIEPLMEPEGESYEEQPQEEYQEYEPEA. Acidic residues predominate over residues 98–134; sequence VAQEAAEEPLIEPLMEPEGESYEEQPQEEYQEYEPEA. S118 is subject to Phosphoserine; by BARK1, CK2 and GRK5.

It belongs to the synuclein family. Post-translationally, phosphorylated. Phosphorylation by G-protein coupled receptor kinases (GRK) is more efficient than phosphorylation by CK1, CK2 and CaM-kinase II. As to expression, specifically present in synapses around neurons but not in glial cells.

It is found in the cytoplasm. In terms of biological role, may be involved in neuronal plasticity. This is Beta-synuclein (SNCB) from Bos taurus (Bovine).